A 779-amino-acid chain; its full sequence is uncharacterized protein (779 aa).

Phosphoserine is present on residues S97 and S120. Over residues 125 to 135 (EIDGEDEKKSV) the composition is skewed to basic and acidic residues. The disordered stretch occupies residues 125–174 (EIDGEDEKKSVGQESITGSAKRKDRRSKTNGSKRQKAEANREPPSDISLS). Residues 144–158 (AKRKDRRSKTNGSKR) are compositionally biased toward basic residues. Residues 159–168 (QKAEANREPP) are compositionally biased toward basic and acidic residues. ATP contacts are provided by residues 215 to 222 (GPPGCGKT) and 533 to 540 (GPPGCGKT). The interval 759 to 779 (DRQKYQRLAKRWSSASTNDAD) is disordered.

It belongs to the AAA ATPase family.

The protein localises to the nucleus. This is an uncharacterized protein from Schizosaccharomyces pombe (strain 972 / ATCC 24843) (Fission yeast).